We begin with the raw amino-acid sequence, 306 residues long: Protein pxr1 (306 aa).

Basic residues predominate over residues 1 to 11 (MGLAAPRKRTK). 2 disordered regions span residues 1–27 (MGLA…STSG) and 148–241 (AQKE…SDIP). Positions 15–27 (DPNNTNWSRSTSG) are enriched in polar residues. The 55-residue stretch at 25-79 (TSGYGHKIMSSQGWTPGSFLGARNAAHADMFTAASASHIRVVVKDDTLGLGARSK) folds into the G-patch domain. Over residues 182-191 (NTLKALREEQ) the composition is skewed to basic and acidic residues. Basic residues predominate over residues 219–228 (KKERKTKKRK).

It belongs to the PINX1 family.

Its subcellular location is the nucleus. The protein localises to the nucleolus. Functionally, involved in rRNA-processing at A0, A1 and A2 sites and negatively regulates telomerase. This Aspergillus oryzae (strain ATCC 42149 / RIB 40) (Yellow koji mold) protein is Protein pxr1 (pxr1).